Here is a 444-residue protein sequence, read N- to C-terminus: ATP-dependent RNA helicase sub2 (444 aa).

The Q motif motif lies at 59-87; it reads TGFREFLLKPELLRAISWCGFEHPSEVQQ. One can recognise a Helicase ATP-binding domain in the interval 90 to 265; the sequence is IPQAILGTDV…KKFMQNPLEI (176 aa). 103-110 contacts ATP; that stretch reads AKSGLGKT. Residues 212 to 215 carry the DECD box motif; it reads DECD. One can recognise a Helicase C-terminal domain in the interval 277–438; the sequence is GLQQYYIKLE…EYPEGGVDSA (162 aa).

Belongs to the DEAD box helicase family. DECD subfamily.

Its subcellular location is the nucleus. The enzyme catalyses ATP + H2O = ADP + phosphate + H(+). In terms of biological role, ATP-binding RNA helicase involved in transcription elongation and required for the export of mRNA out of the nucleus. SUB2 also plays a role in pre-mRNA splicing and spliceosome assembly. May be involved in rDNA and telomeric silencing, and maintenance of genome integrity. The chain is ATP-dependent RNA helicase sub2 (sub2) from Sclerotinia sclerotiorum (strain ATCC 18683 / 1980 / Ss-1) (White mold).